The sequence spans 587 residues: Glucosylglycerate phosphorylase (587 aa).

Asp236 functions as the Nucleophile in the catalytic mechanism.

The protein belongs to the glycosyl hydrolase 13 family. Glucosylglycerate phosphorylase subfamily.

It catalyses the reaction (2R)-2-O-(alpha-D-glucopyranosyl)-glycerate + phosphate = (R)-glycerate + alpha-D-glucose 1-phosphate. In terms of biological role, catalyzes the reversible phosphorolysis of glucosylglycerate into alpha-D-glucose 1-phosphate (Glc1P) and D-glycerate. May be a regulator of intracellular levels of glucosylglycerate, a compatible solute that primarily protects organisms facing salt stress and very specific nutritional constraints. Cannot catalyze the phosphorolysis of sucrose. The protein is Glucosylglycerate phosphorylase of Spirochaeta thermophila (strain ATCC 700085 / DSM 6578 / Z-1203).